A 382-amino-acid polypeptide reads, in one-letter code: Glucose-1-phosphate adenylyltransferase (382 aa).

Residues Tyr100, Gly165, 180–181 (EK), and Ser191 contribute to the alpha-D-glucose 1-phosphate site.

Belongs to the bacterial/plant glucose-1-phosphate adenylyltransferase family. In terms of assembly, homotetramer.

It catalyses the reaction alpha-D-glucose 1-phosphate + ATP + H(+) = ADP-alpha-D-glucose + diphosphate. The protein operates within glycan biosynthesis; glycogen biosynthesis. Functionally, involved in the biosynthesis of ADP-glucose, a building block required for the elongation reactions to produce glycogen. Catalyzes the reaction between ATP and alpha-D-glucose 1-phosphate (G1P) to produce pyrophosphate and ADP-Glc. The protein is Glucose-1-phosphate adenylyltransferase of Clostridium novyi (strain NT).